The primary structure comprises 343 residues: 3-dehydroquinate synthase (343 aa).

NAD(+) is bound by residues 61-66 (SGEKYK), 95-99 (GVISD), 119-120 (TT), K132, K141, and 159-162 (FLKT). Positions 174, 231, and 248 each coordinate Zn(2+).

Belongs to the sugar phosphate cyclases superfamily. Dehydroquinate synthase family. NAD(+) is required as a cofactor. The cofactor is Co(2+). Zn(2+) serves as cofactor.

It localises to the cytoplasm. The catalysed reaction is 7-phospho-2-dehydro-3-deoxy-D-arabino-heptonate = 3-dehydroquinate + phosphate. Its pathway is metabolic intermediate biosynthesis; chorismate biosynthesis; chorismate from D-erythrose 4-phosphate and phosphoenolpyruvate: step 2/7. Functionally, catalyzes the conversion of 3-deoxy-D-arabino-heptulosonate 7-phosphate (DAHP) to dehydroquinate (DHQ). In Helicobacter pylori (strain J99 / ATCC 700824) (Campylobacter pylori J99), this protein is 3-dehydroquinate synthase.